The primary structure comprises 230 residues: L-aspartate/glutamate-specific racemase (230 aa).

Residues methionine 10, glutamine 52, and 83–85 each bind substrate; that span reads TNT. The Proton donor role is filled by threonine 83. Residue cysteine 197 is the Proton acceptor of the active site. Residue 198–199 participates in substrate binding; sequence TE.

Belongs to the aspartate/glutamate racemases family. As to quaternary structure, homodimer.

The enzyme catalyses L-glutamate = D-glutamate. It catalyses the reaction L-aspartate = D-aspartate. Exhibits racemase activity for both L-glutamate and L-aspartate. The sequence is that of L-aspartate/glutamate-specific racemase from Escherichia coli O157:H7.